The chain runs to 963 residues: Transcription factor cbf12 (963 aa).

2 disordered regions span residues 130–207 (NPSN…SQGL) and 248–289 (VNMN…PPQK). Composition is skewed to polar residues over residues 143 to 207 (FENN…SQGL) and 249 to 289 (NMNS…PPQK).

The protein belongs to the Su(H) family.

It is found in the nucleus. Transcription factor which function may be to trigger the increase of adhesion at stationary phase, possibly by counteracting or replacing cbf11 at the respective promoters. May also play a cbf11-antagonistic role in the regulation of a number of other important processes such as extracellular material production, colony morphogenesis, ploidy maintenance, or meiosis. The polypeptide is Transcription factor cbf12 (cbf12) (Schizosaccharomyces pombe (strain 972 / ATCC 24843) (Fission yeast)).